The sequence spans 1531 residues: Multidrug resistance-associated protein 1 (1531 aa).

The Extracellular portion of the chain corresponds to 1–33; it reads MALRGFCSADGSDPLWDWNVTWNTSNPDFTKCF. Residues N19 and N23 are each glycosylated (N-linked (GlcNAc...) asparagine). The helical transmembrane segment at 34-54 threads the bilayer; that stretch reads QNTVLVWVPCFYLWACFPFYF. Over 55-74 the chain is Cytoplasmic; sequence LYLSRHDRGYIQMTPLNKTK. The chain crosses the membrane as a helical span at residues 75–95; sequence TALGFLLWIVCWADLFYSFWE. Residues 96 to 100 lie on the Extracellular side of the membrane; the sequence is RSRGI. The chain crosses the membrane as a helical span at residues 101-121; sequence FLAPVFLVSPTLLGITMLLAT. Over 122–133 the chain is Cytoplasmic; the sequence is FLIQLERRKGVQ. Residues 134–154 traverse the membrane as a helical segment; the sequence is SSGIMLTFWLVALVCALAILR. At 155–172 the chain is on the extracellular side; the sequence is SKIMTALKEDAQVDLFRD. Residues 173 to 193 form a helical membrane-spanning segment; the sequence is ITFYVYFSLLLIQLVLSCFSD. The Cytoplasmic segment spans residues 194-316; that stretch reads RSPLFSETIH…KEWNPSLFKV (123 aa). Y277 is subject to Phosphotyrosine. Position 289 is a phosphoserine (S289). A helical transmembrane segment spans residues 317–337; that stretch reads LYKTFGPYFLMSFFFKAIHDL. An ABC transmembrane type-1 1 domain is found at 325–608; it reads FLMSFFFKAI…LPMVISSIVQ (284 aa). Residues 338-363 are Extracellular-facing; the sequence is MMFSGPQILKLLIKFVNDTKAPDWQG. Residues 364-384 form a helical membrane-spanning segment; the sequence is YFYTVLLFVTACLQTLVLHQY. At 385–440 the chain is on the cytoplasmic side; it reads FHICFVSGMRIKTAVIGAVYRKALVITNSARKSSTVGEIVNLMSVDAQRFMDLATY. Residues 441–461 traverse the membrane as a helical segment; it reads INMIWSAPLQVILALYLLWLN. Residues 462 to 464 are Extracellular-facing; it reads LGP. The helical transmembrane segment at 465–485 threads the bilayer; it reads SVLAGVAVMVLMVPVNAVMAM. Topologically, residues 486 to 547 are cytoplasmic; that stretch reads KTKTYQVAHM…VLKKSAYLSA (62 aa). K503 carries the post-translational modification N6-succinyllysine. The helical transmembrane segment at 548-568 threads the bilayer; it reads VGTFTWVCTPFLVALCTFAVY. Topologically, residues 569-590 are extracellular; that stretch reads VTIDENNILDAQTAFVSLALFN. The chain crosses the membrane as a helical span at residues 591–611; sequence ILRFPLNILPMVISSIVQASV. The Cytoplasmic segment spans residues 612–967; it reads SLKRLRIFLS…VKLSVYWDYM (356 aa). The ABC transporter 1 domain occupies 644-868; that stretch reads ITVRNATFTW…DGAFAEFLRT (225 aa). Residues W653, 678–685, and Q713 each bind ATP; that span reads GQVGCGKS. Phosphoserine occurs at positions 905, 915, and 930. Residues 968–988 traverse the membrane as a helical segment; the sequence is KAIGLFISFLSIFLFMCNHVS. One can recognise an ABC transmembrane type-1 2 domain in the interval 975-1256; that stretch reads SFLSIFLFMC…LVRMSSEMET (282 aa). Over 989 to 1025 the chain is Extracellular; it reads ALASNYWLSLWTDDPIVNGTQEHTKVRLSVYGALGIS. A glycan (N-linked (GlcNAc...) asparagine) is linked at N1006. Residues 1026–1046 form a helical membrane-spanning segment; that stretch reads QGIAVFGYSMAVSIGGILASR. Topologically, residues 1047–1089 are cytoplasmic; sequence CLHVDLLHSILRSPMSFFERTPSGNLVNRFSKELDTVDSMIPE. Residues 1090 to 1110 form a helical membrane-spanning segment; that stretch reads VIKMFMGSLFNVIGACIVILL. Residue A1111 is a topological domain, extracellular. Residues 1112–1132 traverse the membrane as a helical segment; the sequence is TPIAAIIIPPLGLIYFFVQRF. Residues 1133 to 1203 lie on the Cytoplasmic side of the membrane; sequence YVASSRQLKR…VANRWLAVRL (71 aa). The helical transmembrane segment at 1204–1224 threads the bilayer; that stretch reads ECVGNCIVLFAALFAVISRHS. The Extracellular portion of the chain corresponds to 1225–1226; it reads LS. Residues 1227 to 1247 traverse the membrane as a helical segment; it reads AGLVGLSVSYSLQVTTYLNWL. Residues 1248–1531 lie on the Cytoplasmic side of the membrane; it reads VRMSSEMETN…YSMAKDAGLV (284 aa). Residues 1293–1527 enclose the ABC transporter 2 domain; it reads VEFRNYCLRY…RGLFYSMAKD (235 aa). Position 1327–1334 (1327–1334) interacts with ATP; sequence GRTGAGKS.

The protein belongs to the ABC transporter superfamily. ABCC family. Conjugate transporter (TC 3.A.1.208) subfamily. As to quaternary structure, (Microbial infection) Interacts with human cytomegalovirus protein UL138; this interaction mediates MRP1 degradation via the lysosome. Lung, testis and peripheral blood mononuclear cells.

The protein localises to the cell membrane. It localises to the basolateral cell membrane. It carries out the reaction ATP + H2O + xenobioticSide 1 = ADP + phosphate + xenobioticSide 2.. The enzyme catalyses an S-substituted glutathione(in) + ATP + H2O = an S-substituted glutathione(out) + ADP + phosphate + H(+). The catalysed reaction is sphing-4-enine 1-phosphate(in) + ATP + H2O = sphing-4-enine 1-phosphate(out) + ADP + phosphate + H(+). It catalyses the reaction leukotriene C4(in) + ATP + H2O = leukotriene C4(out) + ADP + phosphate + H(+). It carries out the reaction 17beta-estradiol 17-O-(beta-D-glucuronate)(in) + ATP + H2O = 17beta-estradiol 17-O-(beta-D-glucuronate)(out) + ADP + phosphate + H(+). The enzyme catalyses daunorubicin(in) + ATP + H2O = daunorubicin(out) + ADP + phosphate + H(+). The catalysed reaction is vincristine(in) + ATP + H2O = vincristine(out) + ADP + phosphate + H(+). It catalyses the reaction 2',3'-cGAMP(in) + ATP + H2O = 2',3'-cGAMP(out) + ADP + phosphate + H(+). It carries out the reaction S-[(2E,6E,10E)-geranylgeranyl]-L-glutathione(in) + ATP + H2O = S-[(2E,6E,10E)-geranylgeranyl]-L-glutathione(out) + ADP + phosphate + H(+). The enzyme catalyses prostaglandin A2-S-(R)-glutathione(in) + ATP + H2O = prostaglandin A2-S-(R)-glutathione(out) + ADP + phosphate + H(+). The catalysed reaction is prostaglandin A2-S-(S)-glutathione(in) + ATP + H2O = prostaglandin A2-S-(S)-glutathione(out) + ADP + phosphate + H(+). MK 571 inhibits sphingosine 1-phosphate and leukotriene C4 export. Functionally, mediates export of organic anions and drugs from the cytoplasm. Mediates ATP-dependent transport of glutathione and glutathione conjugates, leukotriene C4, estradiol-17-beta-o-glucuronide, methotrexate, antiviral drugs and other xenobiotics. Confers resistance to anticancer drugs by decreasing accumulation of drug in cells, and by mediating ATP- and GSH-dependent drug export. Hydrolyzes ATP with low efficiency. Catalyzes the export of sphingosine 1-phosphate from mast cells independently of their degranulation. Participates in inflammatory response by allowing export of leukotriene C4 from leukotriene C4-synthesizing cells. Mediates ATP-dependent, GSH-independent cyclic GMP-AMP (cGAMP) export. Thus, by limiting intracellular cGAMP concentrations negatively regulates the cGAS-STING pathway. Exports S-geranylgeranyl-glutathione (GGG) in lymphoid cells and stromal compartments of lymphoid organs. ABCC1 (via extracellular transport) with GGT5 (via GGG catabolism) establish GGG gradients within lymphoid tissues to position P2RY8-positive lymphocytes at germinal centers in lymphoid follicles and restrict their chemotactic transmigration from blood vessels to the bone marrow parenchyma. Mediates basolateral export of GSH-conjugated R- and S-prostaglandin A2 diastereomers in polarized epithelial cells. In Homo sapiens (Human), this protein is Multidrug resistance-associated protein 1.